The sequence spans 97 residues: UstYa family oxidase VicYc (97 aa).

2 consecutive short sequence motifs (HXXHC) follow at residues His11–Cys15 and His38–Cys42.

This sequence belongs to the ustYa family.

It functions in the pathway mycotoxin biosynthesis. Its function is as follows. UstYa family oxidase, part of the gene cluster that mediates the biosynthesis of the secondary metabolite victorin, the molecular basis for Victoria blight of oats. The role of vicYc within the pathway has still to be determined. The pathway starts with the processing of the precursor vicA1 by several endopeptidases including kexin proteases as well as the cluster-specific S28 family peptidases vicPa and vicPb to produce 7 identical copies of the hexapeptide Gly-Leu-Lys-Leu-Ala-Phe. After being excised from the precursor peptide, the core peptides are cyclized and modified post-translationally by enzymes encoded within the gene cluster. The ustYa family oxidase vicYb is required for the formation of the macrocycle in victorin and the copper amine oxidases (CAOs) vicK1 and vicK2 are responsible for converting victorin to the active form by oxidizing the N-terminal glycyl residue in the peptides to glyoxylate. Relaxed substrate specificity of enzymes in the victorin biosynthetic pathway results in a metabolic grid that produces a set of analogs including victorinines B, C, E or HV-toxin M. In Bipolaris victoriae (strain FI3) (Victoria blight of oats agent), this protein is UstYa family oxidase VicYc.